The sequence spans 275 residues: Large ribosomal subunit protein uL2 (275 aa).

Disordered regions lie at residues 38 to 59 (TRGS…GGHK) and 223 to 275 (VAMN…RKRK). The span at 50–59 (TVRHRGGGHK) shows a compositional bias: basic residues. The segment covering 229 to 244 (DHPHGGGEGRTGEARE) has biased composition (basic and acidic residues).

The protein belongs to the universal ribosomal protein uL2 family. As to quaternary structure, part of the 50S ribosomal subunit. Forms a bridge to the 30S subunit in the 70S ribosome.

Functionally, one of the primary rRNA binding proteins. Required for association of the 30S and 50S subunits to form the 70S ribosome, for tRNA binding and peptide bond formation. It has been suggested to have peptidyltransferase activity; this is somewhat controversial. Makes several contacts with the 16S rRNA in the 70S ribosome. The polypeptide is Large ribosomal subunit protein uL2 (Bordetella bronchiseptica (strain ATCC BAA-588 / NCTC 13252 / RB50) (Alcaligenes bronchisepticus)).